Here is a 179-residue protein sequence, read N- to C-terminus: Protein GrpE (179 aa).

The segment at 1-23 is disordered; it reads MSEEIKEQNVQDAQNENLAPDSV.

This sequence belongs to the GrpE family. In terms of assembly, homodimer.

It localises to the cytoplasm. Participates actively in the response to hyperosmotic and heat shock by preventing the aggregation of stress-denatured proteins, in association with DnaK and GrpE. It is the nucleotide exchange factor for DnaK and may function as a thermosensor. Unfolded proteins bind initially to DnaJ; upon interaction with the DnaJ-bound protein, DnaK hydrolyzes its bound ATP, resulting in the formation of a stable complex. GrpE releases ADP from DnaK; ATP binding to DnaK triggers the release of the substrate protein, thus completing the reaction cycle. Several rounds of ATP-dependent interactions between DnaJ, DnaK and GrpE are required for fully efficient folding. The sequence is that of Protein GrpE from Campylobacter curvus (strain 525.92).